The chain runs to 104 residues: DNA-directed RNA polymerase subunit Rpo13 (104 aa).

2 disordered regions span residues 1 to 34 (MVSG…EEFP) and 76 to 104 (EKRD…SVEG). Positions 7 to 31 (TEEEKEGTNDEEVSEEREVEETSEE) are enriched in acidic residues. E32 contributes to the DNA binding site. Positions 80 to 104 (SRRKAKKAASKKVKKTKKKEKSVEG) are enriched in basic residues. Residues 81-104 (RRKAKKAASKKVKKTKKKEKSVEG) are required to bind DNA.

It belongs to the archaeal Rpo13 RNA polymerase subunit family. In terms of assembly, part of the 13-subunit RNA polymerase complex. Rpo1N and Rpo5 form a cleft which docks Rpo13. Forms predominantly dimers in solution, although monomers and trimers can also be seen. Found associated with RNAP but also as a homodimer pool in the cytoplasm in vivo.

It localises to the cytoplasm. The catalysed reaction is RNA(n) + a ribonucleoside 5'-triphosphate = RNA(n+1) + diphosphate. DNA-dependent RNA polymerase (RNAP) catalyzes the transcription of DNA into RNA using the four ribonucleoside triphosphates as substrates. A molten-globule protein, it binds dsDNA in the RNAP, in vitro binds dsDNA but not ssDNA. Its position in RNAP implies it functions in both transcription initiation and elongation. This chain is DNA-directed RNA polymerase subunit Rpo13, found in Saccharolobus shibatae (strain ATCC 51178 / DSM 5389 / JCM 8931 / NBRC 15437 / B12) (Sulfolobus shibatae).